Here is a 325-residue protein sequence, read N- to C-terminus: tRNA(Ile)-lysidine synthase (325 aa).

34–39 (SGGADS) provides a ligand contact to ATP.

This sequence belongs to the tRNA(Ile)-lysidine synthase family.

The protein resides in the cytoplasm. The enzyme catalyses cytidine(34) in tRNA(Ile2) + L-lysine + ATP = lysidine(34) in tRNA(Ile2) + AMP + diphosphate + H(+). In terms of biological role, ligates lysine onto the cytidine present at position 34 of the AUA codon-specific tRNA(Ile) that contains the anticodon CAU, in an ATP-dependent manner. Cytidine is converted to lysidine, thus changing the amino acid specificity of the tRNA from methionine to isoleucine. The sequence is that of tRNA(Ile)-lysidine synthase from Rhodococcus jostii (strain RHA1).